A 115-amino-acid chain; its full sequence is Nucleoid-associated protein Ccel_0243 (115 aa).

Belongs to the YbaB/EbfC family. Homodimer.

Its subcellular location is the cytoplasm. It is found in the nucleoid. Functionally, binds to DNA and alters its conformation. May be involved in regulation of gene expression, nucleoid organization and DNA protection. The protein is Nucleoid-associated protein Ccel_0243 of Ruminiclostridium cellulolyticum (strain ATCC 35319 / DSM 5812 / JCM 6584 / H10) (Clostridium cellulolyticum).